We begin with the raw amino-acid sequence, 334 residues long: Protein-methionine-sulfoxide reductase catalytic subunit MsrP (334 aa).

Residues 1–44 constitute a signal peptide (tat-type signal); that stretch reads MKKIRPLTEADVTAESAFFMQRRQVLKALGISAAALSLPSTAQA. Mo-molybdopterin is bound by residues Asn-88, 91-92, Cys-146, Thr-181, Asn-233, Arg-238, and 249-251; these read YE and GIK.

The protein belongs to the MsrP family. In terms of assembly, heterodimer of a catalytic subunit (MsrP) and a heme-binding subunit (MsrQ). Requires Mo-molybdopterin as cofactor. Predicted to be exported by the Tat system. The position of the signal peptide cleavage has not been experimentally proven.

Its subcellular location is the periplasm. The enzyme catalyses L-methionyl-[protein] + a quinone + H2O = L-methionyl-(S)-S-oxide-[protein] + a quinol. It carries out the reaction L-methionyl-[protein] + a quinone + H2O = L-methionyl-(R)-S-oxide-[protein] + a quinol. Its function is as follows. Part of the MsrPQ system that repairs oxidized periplasmic proteins containing methionine sulfoxide residues (Met-O), using respiratory chain electrons. Thus protects these proteins from oxidative-stress damage caused by reactive species of oxygen and chlorine generated by the host defense mechanisms. MsrPQ is essential for the maintenance of envelope integrity under bleach stress, rescuing a wide series of structurally unrelated periplasmic proteins from methionine oxidation, including the primary periplasmic chaperone SurA and the lipoprotein Pal. The catalytic subunit MsrP is non-stereospecific, being able to reduce both (R-) and (S-) diastereoisomers of methionine sulfoxide. The sequence is that of Protein-methionine-sulfoxide reductase catalytic subunit MsrP from Salmonella newport (strain SL254).